The primary structure comprises 711 residues: Putative membrane protein ActII-3 (711 aa).

Transmembrane regions (helical) follow at residues 14–34 (LKWL…PLAG), 175–195 (ADFK…VVTY), 199–219 (LLWL…QAIV), 235–255 (AMIL…LLVA), 281–301 (AIVA…LAAL), 313–333 (VGVL…LVIF), 369–389 (AVWV…VTLN), 516–536 (IIPV…RALV), 540–560 (LLIA…ALFF), 573–593 (FPLW…IFLV), 623–643 (AGLV…VFIA), and 645–665 (LGFT…SVLV). The interval 685-711 (REDPSEDPAVSGMPDSIDSEASTTASR) is disordered.

It belongs to the resistance-nodulation-cell division (RND) (TC 2.A.6) family. MmpL subfamily.

The protein localises to the cell membrane. The sequence is that of Putative membrane protein ActII-3 (actII-3) from Streptomyces coelicolor (strain ATCC BAA-471 / A3(2) / M145).